The sequence spans 380 residues: METQGKVITCKAAVAWGAGEPLVMEDVKVDPPQRLEVRIRILFTSICHTDLSAWKGENEAQRAYPRILGHEAAGIVESVGEGVEEMMAGDHVLPIFTGECGDCRVCKRDGANLCERFRVDPMKKVMVTDGKTRFFTSKDNKPIYHFLNTSTFSEYTVIDSACVLKVDPLFPLEKISLLSCGVSTGVGAAWNVADIQPASTVAIFGLGAVGLAVAEGARARGASKIIGIDINPDKFQLGREAGISEFINPKESDKAVHERVMEITEGGVEYSFECAGSIEALREAFLSTNSGVGVTVMLGVHASPQLLPIHPMELFQGRSITASVFGGFKPKTQLPFFITQCLQGLLNLDLFISHQLPFHDINEAMQLLHQGKALRCLLHL.

Zn(2+) is bound by residues cysteine 47, threonine 49, histidine 70, cysteine 100, cysteine 103, cysteine 106, cysteine 114, and cysteine 180. An alcohol is bound by residues threonine 49 and histidine 70. Threonine 49 lines the NAD(+) pocket. NAD(+) is bound by residues glycine 205 to glycine 210, aspartate 229, lysine 234, leucine 298 to valine 300, phenylalanine 325, and arginine 375.

It belongs to the zinc-containing alcohol dehydrogenase family. Class-III subfamily. In terms of assembly, homodimer. Requires Zn(2+) as cofactor.

It is found in the cytoplasm. The enzyme catalyses a primary alcohol + NAD(+) = an aldehyde + NADH + H(+). It carries out the reaction a secondary alcohol + NAD(+) = a ketone + NADH + H(+). This is Alcohol dehydrogenase-like 4 from Arabidopsis thaliana (Mouse-ear cress).